The sequence spans 156 residues: Small ribosomal subunit protein uS7 (156 aa).

Part of the 30S ribosomal subunit. Contacts proteins S9 and S11. Binds to the C-terminus of IF3 and to the C-terminus of Era.

Its function is as follows. One of the primary rRNA binding proteins, it binds directly to 3'-end of the 16S rRNA where it nucleates assembly of the head domain of the 30S subunit. Is located at the subunit interface close to the decoding center. Binds mRNA and the E site tRNA blocking its exit path in the ribosome. This blockage implies that this section of the ribosome must be able to move to release the deacetylated tRNA. The chain is Small ribosomal subunit protein uS7 (rpsG) from Thermus thermophilus (strain ATCC 27634 / DSM 579 / HB8).